The primary structure comprises 447 residues: Probable protein phosphatase 2C 71 (447 aa).

The 247-residue stretch at 33–279 folds into the PPM-type phosphatase domain; sequence SYGYASSAGK…DNITCVVVRF (247 aa). Mn(2+)-binding residues include Asp69, Gly70, Asp231, and Asp270. Low complexity predominate over residues 284–297; the sequence is SANNNGSSSSEEAN. The disordered stretch occupies residues 284–447; sequence SANNNGSSSS…ARKTTPSIFN (164 aa). Over residues 305-331 the composition is skewed to basic and acidic residues; it reads NDSDHKISAKETNQDHTTVNKDLDRNT. 2 stretches are compositionally biased toward polar residues: residues 346–374 and 392–423; these read ADNS…TGEK and KVPN…GSTG. Basic and acidic residues predominate over residues 424 to 438; it reads ERNRKPIKVHSDSAA.

It belongs to the PP2C family. Requires Mg(2+) as cofactor. Mn(2+) serves as cofactor.

It catalyses the reaction O-phospho-L-seryl-[protein] + H2O = L-seryl-[protein] + phosphate. The enzyme catalyses O-phospho-L-threonyl-[protein] + H2O = L-threonyl-[protein] + phosphate. The chain is Probable protein phosphatase 2C 71 from Arabidopsis thaliana (Mouse-ear cress).